The primary structure comprises 473 residues: Laccase-3 (473 aa).

The N-terminal stretch at methionine 1 to alanine 21 is a signal peptide. Plastocyanin-like domains are found at residues isoleucine 23–tyrosine 148 and valine 160–tyrosine 298. Asparagine 75 carries an N-linked (GlcNAc...) asparagine glycan. Residues histidine 85, histidine 87, histidine 130, and histidine 132 each contribute to the Cu cation site. Disulfide bonds link cysteine 106-cysteine 462 and cysteine 138-cysteine 221. 6 N-linked (GlcNAc...) asparagine glycosylation sites follow: asparagine 226, asparagine 283, asparagine 309, asparagine 346, asparagine 350, and asparagine 374. Residues threonine 365–aspartate 444 form the Plastocyanin-like 3 domain. Cu cation-binding residues include histidine 410, histidine 413, histidine 415, histidine 426, cysteine 427, histidine 428, and histidine 432. Residue asparagine 470 is glycosylated (N-linked (GlcNAc...) asparagine).

Belongs to the multicopper oxidase family. Homodimer. Cu cation is required as a cofactor.

The protein resides in the secreted. The enzyme catalyses 4 hydroquinone + O2 = 4 benzosemiquinone + 2 H2O. Its function is as follows. Lignin degradation and detoxification of lignin-derived products. This Trametes villosa (White-rot fungus) protein is Laccase-3 (LCC3).